The primary structure comprises 583 residues: Scarecrow-like protein 30 (583 aa).

2 disordered regions span residues 107-154 (GDLE…RKSK) and 182-205 (EATE…KSDQ). Residues 115-124 (GNFSSITSLH) are compositionally biased toward polar residues. The segment covering 131-140 (ESTRRYRHRD) has biased composition (basic and acidic residues). Residues 200–579 (QQKSDQPVDM…RVLYAVSCWK (380 aa)) enclose the GRAS domain. Residues 207–266 (VDMRNLLMQCAQAVASFDQRRAFEKLKEIREHSSRHGDATQRLGYHFAEALEARITGTMT) are leucine repeat I (LRI). The tract at residues 285-350 (YKGFVQACPT…IGPPLLRVTG (66 aa)) is VHIID. The VHIID motif lies at 316–320 (LHIID). Positions 366 to 398 (ETGRRLKRFCDKFNVPFEYSFIAKNWENITLDD) are leucine repeat II (LRII). Residues 407–501 (TVVNCILRLQ…RELIIRDAMS (95 aa)) are PFYRE. Positions 504–579 (ACEGSERFAR…RVLYAVSCWK (76 aa)) are SAW.

It belongs to the GRAS family. As to quaternary structure, interacts with SNRNP35 and CYP95. Expressed in seedlings, leaves, sepals, stamen and pistil, and in the quiescent center of root meristem.

The protein resides in the nucleus. In terms of biological role, probable transcription factor involved in plant development. This is Scarecrow-like protein 30 (SCL30) from Arabidopsis thaliana (Mouse-ear cress).